A 210-amino-acid polypeptide reads, in one-letter code: Putative biopolymer transport protein ExbB-like 3 (210 aa).

3 helical membrane passes run 2–22 (AGGI…ALII), 104–124 (LFQT…ILGL), and 152–172 (LVST…ANVF).

This sequence belongs to the ExbB/TolQ family.

It localises to the cell inner membrane. In terms of biological role, involved in the TonB-dependent energy-dependent transport of various receptor-bound substrates. Protects ExbD from proteolytic degradation and functionally stabilizes TonB. This Synechocystis sp. (strain ATCC 27184 / PCC 6803 / Kazusa) protein is Putative biopolymer transport protein ExbB-like 3.